We begin with the raw amino-acid sequence, 256 residues long: Imidazole glycerol phosphate synthase subunit hisF1 (256 aa).

Active-site residues include aspartate 11 and aspartate 130.

Belongs to the HisA/HisF family. In terms of assembly, heterodimer of HisH and HisF.

The protein localises to the cytoplasm. It catalyses the reaction 5-[(5-phospho-1-deoxy-D-ribulos-1-ylimino)methylamino]-1-(5-phospho-beta-D-ribosyl)imidazole-4-carboxamide + L-glutamine = D-erythro-1-(imidazol-4-yl)glycerol 3-phosphate + 5-amino-1-(5-phospho-beta-D-ribosyl)imidazole-4-carboxamide + L-glutamate + H(+). The protein operates within amino-acid biosynthesis; L-histidine biosynthesis; L-histidine from 5-phospho-alpha-D-ribose 1-diphosphate: step 5/9. Its function is as follows. IGPS catalyzes the conversion of PRFAR and glutamine to IGP, AICAR and glutamate. The HisF subunit catalyzes the cyclization activity that produces IGP and AICAR from PRFAR using the ammonia provided by the HisH subunit. The sequence is that of Imidazole glycerol phosphate synthase subunit hisF1 (hisF1) from Parasynechococcus marenigrum (strain WH8102).